Consider the following 205-residue polypeptide: MIQGIIGKKIGMTQIFQEDGKAQPVTLVEAGPCVVVQVKTEKQDGYEAVQLGYGKAKHITSAVKGQCRGFGEFKVLREVDVDDIAAVSVGDQITVSDFKDGEKIDASGVSRGRGFSGVVKRWHFAGGPKTHGQSDRHRAPGSIGSTTTPGRIYKGKHMAGHMGNEAVTIRNLVVLKTDAEKNLLMVKGAIPGGKNTIILIKKTGK.

The tract at residues 126–150 (GGPKTHGQSDRHRAPGSIGSTTTPG) is disordered.

Belongs to the universal ribosomal protein uL3 family. In terms of assembly, part of the 50S ribosomal subunit. Forms a cluster with proteins L14 and L19.

In terms of biological role, one of the primary rRNA binding proteins, it binds directly near the 3'-end of the 23S rRNA, where it nucleates assembly of the 50S subunit. The polypeptide is Large ribosomal subunit protein uL3 (Dehalococcoides mccartyi (strain ATCC BAA-2100 / JCM 16839 / KCTC 5957 / BAV1)).